The following is a 313-amino-acid chain: Ribosomal protein L11 methyltransferase (313 aa).

S-adenosyl-L-methionine contacts are provided by Thr154, Gly179, Asp201, and Asn242.

This sequence belongs to the methyltransferase superfamily. PrmA family.

The protein localises to the cytoplasm. The catalysed reaction is L-lysyl-[protein] + 3 S-adenosyl-L-methionine = N(6),N(6),N(6)-trimethyl-L-lysyl-[protein] + 3 S-adenosyl-L-homocysteine + 3 H(+). In terms of biological role, methylates ribosomal protein L11. This is Ribosomal protein L11 methyltransferase from Xanthomonas oryzae pv. oryzae (strain MAFF 311018).